A 498-amino-acid polypeptide reads, in one-letter code: Death-associated inhibitor of apoptosis 2 (498 aa).

BIR repeat units lie at residues 12–77 (RLAT…SMVL), 116–180 (RLVT…PRVQ), and 215–280 (RLRT…QFVL). Residues Cys249, Cys252, His269, and Cys276 each contribute to the Zn(2+) site. An RING-type zinc finger spans residues 451 to 486 (CKVCLDEEVGVVFLPCGHLATCNQCAPSVANCPMCR).

The protein belongs to the IAP family. Interacts with the caspase Strica. Interacts (via BIR2 domain) with rpr and grim. Interacts (via the BIR2 and BIR3 domains) with hid. Interacts (via BIR3 domain) with Drice. Interacts with Dredd; likely to bind Dredd simultaneously with Fadd to form a trimeric complex. Caspase-dependent cleavage is required for suppression of Drice-mediated cell death. As to expression, expressed in both principal and stellar cells of the Malphigian tubules.

It localises to the nucleus. The protein localises to the cytoplasm. Its function is as follows. Required for activation of NF-kappaB transcription factors in the immune deficiency (Imd) signaling cascade which is essential for innate immune responses upon infection by Gram-negative bacteria. Promotes cytoplasmic cleavage of Rel and its translocation to the nucleus where it drives expression of antimicrobial peptides. Binds, polyubiquitinates and activates Dredd which is required for Rel-mediated induction of antimicrobial peptides. Anti-apoptotic protein which binds, ubiquitinates and inactivates the effector caspase Drice. Suppresses rpr and hid-dependent cell death in the eye. However, has also been shown to have little, if any, role in the regulation of the canonical caspase-dependent apoptosis pathway. Plays a role in regulating the expression of ion channels. The chain is Death-associated inhibitor of apoptosis 2 (Diap2) from Drosophila melanogaster (Fruit fly).